The sequence spans 113 residues: Small ribosomal subunit protein mS41 (113 aa).

The N-terminal 22 residues, Met1–Tyr22, are a transit peptide targeting the mitochondrion.

The protein belongs to the mitochondrion-specific ribosomal protein mS41 family. In terms of assembly, component of the mitochondrial small ribosomal subunit (mt-SSU). Mature yeast 74S mitochondrial ribosomes consist of a small (37S) and a large (54S) subunit. The 37S small subunit contains a 15S ribosomal RNA (15S mt-rRNA) and at least 32 different proteins. The 54S large subunit contains a 21S rRNA (21S mt-rRNA) and at least 45 different proteins.

It is found in the mitochondrion. In terms of biological role, component of the mitochondrial ribosome (mitoribosome), a dedicated translation machinery responsible for the synthesis of mitochondrial genome-encoded proteins, including at least some of the essential transmembrane subunits of the mitochondrial respiratory chain. The mitoribosomes are attached to the mitochondrial inner membrane and translation products are cotranslationally integrated into the membrane. mS41 is involved in telomere length regulation. The chain is Small ribosomal subunit protein mS41 (fyv4) from Schizosaccharomyces pombe (strain 972 / ATCC 24843) (Fission yeast).